The following is a 485-amino-acid chain: Heat stress transcription factor A-1d (485 aa).

2 disordered regions span residues 1–34 (MDVSKVTTSDGGGDSMETKPSPQPQPAAILSSNA) and 126–149 (RRKPAHGQGQGHQRSQHSNGQNSS). A DNA-binding region spans residues 35–129 (PPPFLSKTYD…LLQSITRRKP (95 aa)). Residues 136-146 (GHQRSQHSNGQ) are compositionally biased toward low complexity. Positions 152–218 (ACVEVGKFGL…QLMSFLAKAV (67 aa)) are hydrophobic repeat HR-A/B. 2 disordered regions span residues 229–269 (QQQN…GQIV) and 436–461 (PVPDNMDSTPVDNETEQEQNGWDKTK). The Bipartite nuclear localization signal motif lies at 238-252 (NRRISDTSKKRRFKR). The span at 441-455 (MDSTPVDNETEQEQN) shows a compositional bias: polar residues. The Nuclear export signal motif lies at 472–480 (LLSPETLDL).

It belongs to the HSF family. Class A subfamily. As to quaternary structure, homotrimer. Interacts with HSP90-2. In terms of processing, exhibits temperature-dependent phosphorylation.

It is found in the cytoplasm. It localises to the nucleus. Its function is as follows. Transcriptional regulator that specifically binds DNA sequence 5'-AGAAnnTTCT-3' known as heat shock promoter elements (HSE). In Arabidopsis thaliana (Mouse-ear cress), this protein is Heat stress transcription factor A-1d (HSFA1D).